The chain runs to 121 residues: Large ribosomal subunit protein uL18 (121 aa).

The disordered stretch occupies residues 63–88 (AAIRPDPSPKKSQKQPPKTHKRYNLK). Positions 73–87 (KSQKQPPKTHKRYNL) are enriched in basic residues.

It belongs to the universal ribosomal protein uL18 family. As to quaternary structure, component of the large ribosomal subunit (LSU).

Its subcellular location is the cytoplasm. It is found in the nucleus. Component of the ribosome, a large ribonucleoprotein complex responsible for the synthesis of proteins in the cell. The small ribosomal subunit (SSU) binds messenger RNAs (mRNAs) and translates the encoded message by selecting cognate aminoacyl-transfer RNA (tRNA) molecules. The large subunit (LSU) contains the ribosomal catalytic site termed the peptidyl transferase center (PTC), which catalyzes the formation of peptide bonds, thereby polymerizing the amino acids delivered by tRNAs into a polypeptide chain. The nascent polypeptides leave the ribosome through a tunnel in the LSU and interact with protein factors that function in enzymatic processing, targeting, and the membrane insertion of nascent chains at the exit of the ribosomal tunnel. This is Large ribosomal subunit protein uL18 (RPL5) from Solanum melongena (Eggplant).